The chain runs to 1166 residues: Folliculin-interacting protein 1 (1166 aa).

A uDENN FNIP1/2-type domain is found at 37-478 (FDPSQIRLIV…TVMPNGQPPI (442 aa)). Residues serine 220, serine 230, serine 232, and serine 261 each carry the phosphoserine; by AMPK modification. Threonine 294 is subject to Phosphothreonine. Serine 296 bears the Phosphoserine mark. A cDENN FNIP1/2-type domain is found at 486 to 1092 (SSQSVDMLAK…VSNLLHSTLQ (607 aa)). Serine 593 bears the Phosphoserine; by AMPK mark. At serine 594 the chain carries Phosphoserine. Zn(2+) contacts are provided by cysteine 608 and cysteine 610. The Cys degron motif lies at 608 to 615 (CNCKYCSH). The tract at residues 611 to 612 (KY) is KY-finger. 2 residues coordinate Zn(2+): cysteine 613 and histidine 615. Phosphoserine occurs at positions 760 and 763. 2 disordered regions span residues 781–817 (TKPLKEERGAIDQHQETKQTTKDQSGESDTQNMVSEE) and 912–956 (LVPH…HDMT). Composition is skewed to basic and acidic residues over residues 783-805 (PLKEERGAIDQHQETKQTTKDQS) and 915-925 (HGDKESSDKKI). The interval 929-1166 (TEWDIPRNES…HSPYVAQILL (238 aa)) is interaction with HSP90AA1. A Phosphoserine; alternate; by CK2 modification is found at serine 938. A glycan (O-linked (GlcNAc) serine; alternate) is linked at serine 938. 4 positions are modified to phosphoserine; by CK2: serine 939, serine 941, serine 946, and serine 948. The region spanning 1102 to 1157 (FCVMHLEDRLQELYFKSKMLSEYLRGQMRVHVKELGVVLGIESSDLPLLAAVASTH) is the dDENN FNIP1/2-type domain. Residue lysine 1119 forms a Glycyl lysine isopeptide (Lys-Gly) (interchain with G-Cter in ubiquitin) linkage.

It belongs to the FNIP family. As to quaternary structure, homodimer and homomultimer. Heterodimer and heteromultimer with FNIP2. Interacts with FLCN (via C-terminus). Component of the lysosomal folliculin complex (LFC), composed of FLCN, FNIP1 (or FNIP2), RagA/RRAGA or RagB/RRAGB GDP-bound, RagC/RRAGC or RagD/RRAGD GTP-bound, and Ragulator. Interacts with HSPCA and with the PRKAA1, PRKAB1 and PRKAG1 subunits of 5'-AMP-activated protein kinase (AMPK). Phosphorylated FLCN and AMPK are preferentially bound. Interacts with HSP70, STIP1, PTGES3, CDC37, BRAF, GCR and CDK4. Interacts with HSP90AA1; the interaction inhibits HSP90AA1 ATPase activity. Interacts with ATP2A2. In terms of processing, phosphorylated by AMPK in response to energetic stress. Phosphorylation by AMPK in response to mitochondrial damage promotes inactivation of the non-canonical mTORC1 signaling, nuclear translocation of TFEB and TFE3, inducing transcription of lysosomal or autophagy genes. Sequential phosphorylation by CK2 promotes its gradual interaction with HSP90AA1/Hsp90. Priming phosphorylation at Ser-938 is followed by relay phosphorylation at Ser-939, Ser-941, Ser-946 and Ser-948, promoting its gradual interaction with HSP90AA1/Hsp90. This leads to incremental inhibition of HSP90AA1/Hsp90 ATPase activity and gradual activation of both kinase and non-kinase clients. Dephosphorylated by protein phosphatase 5 (PP5), promoting glycosylation by OGT. Post-translationally, glcNAcylation at Ser-938 by OGT following dephosphorylation by protein phosphatase 5 (PP5) promotes ubiquitination and degradation by the proteasome. Ubiquitinated through 'Lys-11' linkage of ubiquitin moieties at Lys-1119 following glycosylation by OGT, leading to its degradation by the proteasome. Ubiquitinated by the CRL2(FEM1B) complex in response to reductive stress: reductive stress causes reduction of the conserved Cys degron in FNIP1, followed by zinc-binding, zinc acting as a molecular glue for recognition by the CRL2(FEM1B) complex. Ubiquitination leads to FNIP1 degradation, and activation of mitochondria to recalibrate reactive oxygen species (ROS). In terms of processing, oxidation of the Cys degron in normal conditions promotes its stabilization by preventing recognition and ubiquitination by the CRL2(FEM1B) complex. In terms of tissue distribution, strong expression is found in the heart, liver placenta, muscle, nasal mucosa, salivary gland and uvula and moderate expression in kidney and lung. Higher levels detected in clear cell renal cell carcinoma (RCC) and chromophobe RCC than in normal kidney tissue. Expressed in peripheral blood mononuclear cells.

It localises to the lysosome membrane. The protein localises to the cytoplasm. It is found in the cytosol. Its function is as follows. Binding partner of the GTPase-activating protein FLCN: involved in the cellular response to amino acid availability by regulating the non-canonical mTORC1 signaling cascade controlling the MiT/TFE factors TFEB and TFE3. Required to promote FLCN recruitment to lysosomes and interaction with Rag GTPases, leading to activation of the non-canonical mTORC1 signaling. In low-amino acid conditions, component of the lysosomal folliculin complex (LFC) on the membrane of lysosomes, which inhibits the GTPase-activating activity of FLCN, thereby inactivating mTORC1 and promoting nuclear translocation of TFEB and TFE3. Upon amino acid restimulation, disassembly of the LFC complex liberates the GTPase-activating activity of FLCN, leading to activation of mTORC1 and subsequent inactivation of TFEB and TFE3. Together with FLCN, regulates autophagy: following phosphorylation by ULK1, interacts with GABARAP and promotes autophagy. In addition to its role in mTORC1 signaling, also acts as a co-chaperone of HSP90AA1/Hsp90: following gradual phosphorylation by CK2, inhibits the ATPase activity of HSP90AA1/Hsp90, leading to activate both kinase and non-kinase client proteins of HSP90AA1/Hsp90. Acts as a scaffold to load client protein FLCN onto HSP90AA1/Hsp90. Competes with the activating co-chaperone AHSA1 for binding to HSP90AA1, thereby providing a reciprocal regulatory mechanism for chaperoning of client proteins. Also acts as a core component of the reductive stress response by inhibiting activation of mitochondria in normal conditions: in response to reductive stress, the conserved Cys degron is reduced, leading to recognition and polyubiquitylation by the CRL2(FEM1B) complex, followed by proteasomal. Required for B-cell development. This chain is Folliculin-interacting protein 1, found in Homo sapiens (Human).